Consider the following 201-residue polypeptide: Small ribosomal subunit protein uS4 (201 aa).

The tract at residues 27-47 (SKKNYPPGQHGNSRKRKTSEY) is disordered. The S4 RNA-binding domain occupies 92 to 152 (GRLDNVVYRL…EKSKSMEVIA (61 aa)).

The protein belongs to the universal ribosomal protein uS4 family. As to quaternary structure, part of the 30S ribosomal subunit. Contacts protein S5. The interaction surface between S4 and S5 is involved in control of translational fidelity.

Its function is as follows. One of the primary rRNA binding proteins, it binds directly to 16S rRNA where it nucleates assembly of the body of the 30S subunit. Functionally, with S5 and S12 plays an important role in translational accuracy. The polypeptide is Small ribosomal subunit protein uS4 (Parabacteroides distasonis (strain ATCC 8503 / DSM 20701 / CIP 104284 / JCM 5825 / NCTC 11152)).